Here is a 444-residue protein sequence, read N- to C-terminus: Glutamate-1-semialdehyde 2,1-aminomutase (444 aa).

Lys-278 carries the post-translational modification N6-(pyridoxal phosphate)lysine.

The protein belongs to the class-III pyridoxal-phosphate-dependent aminotransferase family. HemL subfamily. As to quaternary structure, homodimer. The cofactor is pyridoxal 5'-phosphate.

It is found in the cytoplasm. It catalyses the reaction (S)-4-amino-5-oxopentanoate = 5-aminolevulinate. It participates in porphyrin-containing compound metabolism; protoporphyrin-IX biosynthesis; 5-aminolevulinate from L-glutamyl-tRNA(Glu): step 2/2. The chain is Glutamate-1-semialdehyde 2,1-aminomutase from Deinococcus radiodurans (strain ATCC 13939 / DSM 20539 / JCM 16871 / CCUG 27074 / LMG 4051 / NBRC 15346 / NCIMB 9279 / VKM B-1422 / R1).